A 143-amino-acid chain; its full sequence is Transcription antitermination protein NusB (143 aa).

It belongs to the NusB family.

In terms of biological role, involved in transcription antitermination. Required for transcription of ribosomal RNA (rRNA) genes. Binds specifically to the boxA antiterminator sequence of the ribosomal RNA (rrn) operons. This Buchnera aphidicola subsp. Acyrthosiphon pisum (strain APS) (Acyrthosiphon pisum symbiotic bacterium) protein is Transcription antitermination protein NusB.